A 459-amino-acid polypeptide reads, in one-letter code: Bifunctional protein GlmU (459 aa).

Residues 1-230 form a pyrophosphorylase region; it reads MSNRFAVILA…FDETLGVNDR (230 aa). UDP-N-acetyl-alpha-D-glucosamine contacts are provided by residues 9–12, lysine 23, glutamine 73, and 78–79; these read LAAG and GT. A Mg(2+)-binding site is contributed by aspartate 103. Glycine 140, glutamate 155, asparagine 170, and asparagine 228 together coordinate UDP-N-acetyl-alpha-D-glucosamine. Asparagine 228 provides a ligand contact to Mg(2+). The linker stretch occupies residues 231–251; the sequence is VALSQAEIIMKNRINRKNMVN. The tract at residues 252-459 is N-acetyltransferase; it reads GVTIIDPSNT…VDQLLNKKKS (208 aa). UDP-N-acetyl-alpha-D-glucosamine is bound by residues arginine 333 and lysine 351. Histidine 363 serves as the catalytic Proton acceptor. Residues tyrosine 366 and asparagine 377 each coordinate UDP-N-acetyl-alpha-D-glucosamine. Residues 386 to 387, alanine 423, and arginine 440 each bind acetyl-CoA; that span reads NY.

It in the N-terminal section; belongs to the N-acetylglucosamine-1-phosphate uridyltransferase family. In the C-terminal section; belongs to the transferase hexapeptide repeat family. Homotrimer. Mg(2+) is required as a cofactor.

It is found in the cytoplasm. The enzyme catalyses alpha-D-glucosamine 1-phosphate + acetyl-CoA = N-acetyl-alpha-D-glucosamine 1-phosphate + CoA + H(+). It catalyses the reaction N-acetyl-alpha-D-glucosamine 1-phosphate + UTP + H(+) = UDP-N-acetyl-alpha-D-glucosamine + diphosphate. The protein operates within nucleotide-sugar biosynthesis; UDP-N-acetyl-alpha-D-glucosamine biosynthesis; N-acetyl-alpha-D-glucosamine 1-phosphate from alpha-D-glucosamine 6-phosphate (route II): step 2/2. It participates in nucleotide-sugar biosynthesis; UDP-N-acetyl-alpha-D-glucosamine biosynthesis; UDP-N-acetyl-alpha-D-glucosamine from N-acetyl-alpha-D-glucosamine 1-phosphate: step 1/1. It functions in the pathway bacterial outer membrane biogenesis; LPS lipid A biosynthesis. Catalyzes the last two sequential reactions in the de novo biosynthetic pathway for UDP-N-acetylglucosamine (UDP-GlcNAc). The C-terminal domain catalyzes the transfer of acetyl group from acetyl coenzyme A to glucosamine-1-phosphate (GlcN-1-P) to produce N-acetylglucosamine-1-phosphate (GlcNAc-1-P), which is converted into UDP-GlcNAc by the transfer of uridine 5-monophosphate (from uridine 5-triphosphate), a reaction catalyzed by the N-terminal domain. The chain is Bifunctional protein GlmU from Bacillus thuringiensis subsp. konkukian (strain 97-27).